We begin with the raw amino-acid sequence, 113 residues long: Putative single-stranded DNA-binding protein ycf41 (113 aa).

One can recognise an SSB domain in the interval 1–101; sequence MNYASFIIKI…EVSGFKIYPF (101 aa).

The protein localises to the plastid. It is found in the chloroplast. This is Putative single-stranded DNA-binding protein ycf41 (ycf41) from Trieres chinensis (Marine centric diatom).